The sequence spans 292 residues: MTTARYRPTWDLALEPLVSCKLCLGEYTVEQMTTIAQCQCIFCTLCLKQYVELLIKEGLETAISCPDASCPKRGHLQENEIECMVAAEIMQKYKKLQFEKEILLDPCRTWCPSSSCQAVCKLQEKGIQNPQLVQCSACDIEFCSACKANWHPGQGCPENMAITFLPGDSSSFFKSLEDDVPIKRCPKCKVYIERDEGCAQMMCKNCKHAFCWYCLESLDDDFLLIHYDKGPCRNKLGHSRASVIWHRTQVVGIFAGFGLLLLVASPFLLLATPFVLCCKCKCCKGDDDPLPT.

A TRIAD supradomain region spans residues 16 to 236 (PLVSCKLCLG…YDKGPCRNKL (221 aa)). Zn(2+)-binding residues include C20, C23, C43, C46, C111, C116, C135, C138, C143, C146, H151, C156, C185, and C188. The RING-type 1 zinc finger occupies 20–70 (CKLCLGEYTVEQMTTIAQCQCIFCTLCLKQYVELLIKEGLETAISCPDASC). Residues 91–156 (QKYKKLQFEK…KANWHPGQGC (66 aa)) form an IBR-type zinc finger. The RING-type 2; atypical zinc-finger motif lies at 185 to 214 (CPKCKVYIERDEGCAQMMCKNCKHAFCWYC). The active site involves C198. 6 residues coordinate Zn(2+): C203, C206, C211, C214, H226, and C232. Residues 250 to 270 (VVGIFAGFGLLLLVASPFLLL) traverse the membrane as a helical segment.

This sequence belongs to the RBR family. RNF144 subfamily.

The protein resides in the membrane. The catalysed reaction is [E2 ubiquitin-conjugating enzyme]-S-ubiquitinyl-L-cysteine + [acceptor protein]-L-lysine = [E2 ubiquitin-conjugating enzyme]-L-cysteine + [acceptor protein]-N(6)-ubiquitinyl-L-lysine.. It functions in the pathway protein modification; protein ubiquitination. Its function is as follows. E3 ubiquitin-protein ligase which accepts ubiquitin from E2 ubiquitin-conjugating enzymes ube2l3 and ube2l6 in the form of a thioester and then directly transfers the ubiquitin to targeted substrates. The protein is Probable E3 ubiquitin-protein ligase RNF144A (rnf144a) of Xenopus tropicalis (Western clawed frog).